Reading from the N-terminus, the 248-residue chain is Tyrosine recombinase XerD-like (248 aa).

The Core-binding (CB) domain occupies 1-72 (MKSYIEPFIA…TANQFLYYLY (72 aa)). Positions 85–248 (DTMKVMRTEK…PVTLEKYYKS (164 aa)) constitute a Tyr recombinase domain. Catalysis depends on residues Lys149 and Arg213. Tyr245 acts as the O-(3'-phospho-DNA)-tyrosine intermediate in catalysis.

The protein belongs to the 'phage' integrase family. XerD-like subfamily.

It is found in the cytoplasm. Its function is as follows. Putative tyrosine recombinase. Not involved in the cutting and rejoining of the recombining DNA molecules on dif(SL) site. The protein is Tyrosine recombinase XerD-like of Streptococcus pyogenes serotype M4 (strain MGAS10750).